A 256-amino-acid polypeptide reads, in one-letter code: Global transcriptional regulator CodY (256 aa).

Residues 1–155 (MSLLSKTREL…AATVIGMEIL (155 aa)) form a GAF domain region. Positions 203–222 (ASKVADRVGITRSVIVNALR) form a DNA-binding region, H-T-H motif.

This sequence belongs to the CodY family.

The protein resides in the cytoplasm. Its function is as follows. DNA-binding global transcriptional regulator which is involved in the adaptive response to starvation and acts by directly or indirectly controlling the expression of numerous genes in response to nutrient availability. During rapid exponential growth, CodY is highly active and represses genes whose products allow adaptation to nutrient depletion. The chain is Global transcriptional regulator CodY from Staphylococcus epidermidis (strain ATCC 35984 / DSM 28319 / BCRC 17069 / CCUG 31568 / BM 3577 / RP62A).